Consider the following 103-residue polypeptide: Small ribosomal subunit protein uS10 (103 aa).

This sequence belongs to the universal ribosomal protein uS10 family. In terms of assembly, part of the 30S ribosomal subunit.

Involved in the binding of tRNA to the ribosomes. In Chlorobium phaeobacteroides (strain DSM 266 / SMG 266 / 2430), this protein is Small ribosomal subunit protein uS10.